The sequence spans 154 residues: uncharacterized protein (154 aa).

Disordered stretches follow at residues 23–63 (ERVG…VVLK) and 79–154 (IKAA…DENE). A compositionally biased stretch (acidic residues) spans 43 to 56 (PDEDGDHSDKEDEQ). A Phosphoserine modification is found at S50. K108 bears the N6-acetyllysine mark. The residue at position 146 (S146) is a Phosphoserine.

This is an uncharacterized protein from Homo sapiens (Human).